The sequence spans 869 residues: Dynamin-3 (869 aa).

A Dynamin-type G domain is found at 28-294 (LLELPQIAVV…LTNHIRDTLP (267 aa)). Residues 38 to 45 (GGQSAGKS) are G1 motif. A GTP-binding site is contributed by 38-46 (GGQSAGKSS). Residues 64–66 (VTR) form a G2 motif region. Residues 136 to 139 (DLPG) are G3 motif. The G4 motif stretch occupies residues 205 to 208 (TKLD). Position 205-211 (205-211 (TKLDLMD)) interacts with GTP. Tyrosine 231 is modified (phosphotyrosine). The interval 235-238 (VNRS) is G5 motif. 236–239 (NRSQ) provides a ligand contact to GTP. The residue at position 299 (lysine 299) is an N6-acetyllysine. One can recognise a PH domain in the interval 515–621 (QGTNLPPSRQ…ACDSQEDVDS (107 aa)). At tyrosine 603 the chain carries Phosphotyrosine. Lysine 604 is subject to N6-acetyllysine. The GED domain occupies 659–750 (VETIRNLVDS…IIGDISTATV (92 aa)). The interval 747 to 869 (TATVSTPAPP…IRPLESSLLD (123 aa)) is disordered. Phosphoserine is present on residues serine 769 and serine 773. 2 stretches are compositionally biased toward pro residues: residues 797 to 822 (PAIP…PPFP) and 832 to 855 (PQVP…PSPT). Serine 853 carries the post-translational modification Phosphoserine.

Belongs to the TRAFAC class dynamin-like GTPase superfamily. Dynamin/Fzo/YdjA family.

It is found in the cytoplasm. Its subcellular location is the cytoskeleton. It catalyses the reaction GTP + H2O = GDP + phosphate + H(+). Microtubule-associated force-producing protein involved in producing microtubule bundles and able to bind and hydrolyze GTP. Most probably involved in vesicular trafficking processes, in particular endocytosis. This is Dynamin-3 (DNM3) from Homo sapiens (Human).